An 879-amino-acid polypeptide reads, in one-letter code: Alanine--tRNA ligase (879 aa).

4 residues coordinate Zn(2+): His-566, His-570, Cys-668, and His-672.

This sequence belongs to the class-II aminoacyl-tRNA synthetase family. The cofactor is Zn(2+).

Its subcellular location is the cytoplasm. The catalysed reaction is tRNA(Ala) + L-alanine + ATP = L-alanyl-tRNA(Ala) + AMP + diphosphate. In terms of biological role, catalyzes the attachment of alanine to tRNA(Ala) in a two-step reaction: alanine is first activated by ATP to form Ala-AMP and then transferred to the acceptor end of tRNA(Ala). Also edits incorrectly charged Ser-tRNA(Ala) and Gly-tRNA(Ala) via its editing domain. The chain is Alanine--tRNA ligase from Listeria monocytogenes serovar 1/2a (strain ATCC BAA-679 / EGD-e).